Reading from the N-terminus, the 154-residue chain is Endoribonuclease YbeY (154 aa).

Residues H113, H117, and H123 each contribute to the Zn(2+) site.

The protein belongs to the endoribonuclease YbeY family. The cofactor is Zn(2+).

It localises to the cytoplasm. Its function is as follows. Single strand-specific metallo-endoribonuclease involved in late-stage 70S ribosome quality control and in maturation of the 3' terminus of the 16S rRNA. In Anaplasma marginale (strain Florida), this protein is Endoribonuclease YbeY.